The primary structure comprises 344 residues: Ribosomal RNA large subunit methyltransferase Cfr (344 aa).

Glu90 (proton acceptor) is an active-site residue. One can recognise a Radical SAM core domain in the interval 97-330 (KQGWESFCIS…ATVRTQFGSE (234 aa)). A disulfide bridge links Cys104 with Cys335. Residues Cys111, Cys115, and Cys118 each coordinate [4Fe-4S] cluster. Residues 157 to 158 (GE), Ser188, 211 to 213 (SLH), and Asn292 contribute to the S-adenosyl-L-methionine site. Cys335 acts as the S-methylcysteine intermediate in catalysis.

The protein belongs to the radical SAM superfamily. RlmN family. Cfr subfamily. It depends on [4Fe-4S] cluster as a cofactor.

Its subcellular location is the cytoplasm. It catalyses the reaction adenosine(2503) in 23S rRNA + 2 reduced [2Fe-2S]-[ferredoxin] + 2 S-adenosyl-L-methionine = 8-methyladenosine(2503) in 23S rRNA + 5'-deoxyadenosine + L-methionine + 2 oxidized [2Fe-2S]-[ferredoxin] + S-adenosyl-L-homocysteine. In terms of biological role, specifically methylates position 8 of adenine 2503 in 23S rRNA. Confers resistance to some classes of antibiotics. The chain is Ribosomal RNA large subunit methyltransferase Cfr from Clostridium botulinum (strain Langeland / NCTC 10281 / Type F).